A 152-amino-acid chain; its full sequence is Acidic phospholipase A2 57 (152 aa).

A signal peptide spans 1 to 21 (MYPAHLLGLLAVCVSLLGAAS). Residues 22 to 27 (IPPLPL) constitute a propeptide that is removed on maturation. Cystine bridges form between C38/C104, C54/C151, C56/C72, C71/C132, C78/C125, C88/C118, and C111/C123. Positions 55, 57, and 59 each coordinate Ca(2+). Residue H75 is part of the active site. D76 is a Ca(2+) binding site. D126 is an active-site residue.

The protein belongs to the phospholipase A2 family. Group I subfamily. D49 sub-subfamily. Ca(2+) is required as a cofactor. Expressed by the venom gland.

It localises to the secreted. The enzyme catalyses a 1,2-diacyl-sn-glycero-3-phosphocholine + H2O = a 1-acyl-sn-glycero-3-phosphocholine + a fatty acid + H(+). PLA2 catalyzes the calcium-dependent hydrolysis of the 2-acyl groups in 3-sn-phosphoglycerides. The protein is Acidic phospholipase A2 57 of Hydrophis hardwickii (Hardwick's spine-bellied seasnake).